We begin with the raw amino-acid sequence, 217 residues long: Probable transaldolase (217 aa).

The active-site Schiff-base intermediate with substrate is K83.

Belongs to the transaldolase family. Type 3B subfamily.

Its subcellular location is the cytoplasm. It catalyses the reaction D-sedoheptulose 7-phosphate + D-glyceraldehyde 3-phosphate = D-erythrose 4-phosphate + beta-D-fructose 6-phosphate. It functions in the pathway carbohydrate degradation; pentose phosphate pathway; D-glyceraldehyde 3-phosphate and beta-D-fructose 6-phosphate from D-ribose 5-phosphate and D-xylulose 5-phosphate (non-oxidative stage): step 2/3. Its function is as follows. Transaldolase is important for the balance of metabolites in the pentose-phosphate pathway. The chain is Probable transaldolase from Lactiplantibacillus plantarum (strain ATCC BAA-793 / NCIMB 8826 / WCFS1) (Lactobacillus plantarum).